Consider the following 268-residue polypeptide: Endonuclease 8 1 (268 aa).

Pro2 acts as the Schiff-base intermediate with DNA in catalysis. Glu3 serves as the catalytic Proton donor. Lys52 (proton donor; for beta-elimination activity) is an active-site residue. Residues Arg125 and Asn166 each contribute to the DNA site. Residues Tyr234 to Thr268 form an FPG-type zinc finger. Arg258 serves as the catalytic Proton donor; for delta-elimination activity.

It belongs to the FPG family. Zn(2+) serves as cofactor.

It catalyses the reaction 2'-deoxyribonucleotide-(2'-deoxyribose 5'-phosphate)-2'-deoxyribonucleotide-DNA = a 3'-end 2'-deoxyribonucleotide-(2,3-dehydro-2,3-deoxyribose 5'-phosphate)-DNA + a 5'-end 5'-phospho-2'-deoxyribonucleoside-DNA + H(+). Its function is as follows. Involved in base excision repair of DNA damaged by oxidation or by mutagenic agents. Acts as a DNA glycosylase that recognizes and removes damaged bases. Has AP (apurinic/apyrimidinic) lyase activity and introduces nicks in the DNA strand. Cleaves the DNA backbone by beta-delta elimination to generate a single-strand break at the site of the removed base with both 3'- and 5'-phosphates. This Mycobacterium bovis (strain ATCC BAA-935 / AF2122/97) protein is Endonuclease 8 1 (nei1).